The chain runs to 182 residues: MSVDVTNETQWVIDPKVFSDLGIWVLDQMRVSTQSDLTIMFVDPNPIAELHMRWMNLEGPTDVMSFPMDELRPGDGKTVMEGVLGDIVICPWVAAQQAAAAGHSTMQEMLLLTIHGILHLLGYDHVTPEQERQMFGLQRQLLLTFFALRHDANVQATLPAGTPDALALYDAAHGAGRDLDSK.

3 residues coordinate Zn(2+): H115, H119, and H125.

The protein belongs to the endoribonuclease YbeY family. Zn(2+) is required as a cofactor.

It is found in the cytoplasm. Functionally, single strand-specific metallo-endoribonuclease involved in late-stage 70S ribosome quality control and in maturation of the 3' terminus of the 16S rRNA. The polypeptide is Endoribonuclease YbeY (Bifidobacterium longum subsp. infantis (strain ATCC 15697 / DSM 20088 / JCM 1222 / NCTC 11817 / S12)).